The following is a 213-amino-acid chain: UPF0301 protein Aave_0907 (213 aa).

Residues 93-120 form a disordered region; sequence MGPSSGKQAAGEGGAQAEGEGAEESAYA.

This sequence belongs to the UPF0301 (AlgH) family.

The protein is UPF0301 protein Aave_0907 of Paracidovorax citrulli (strain AAC00-1) (Acidovorax citrulli).